The following is a 250-amino-acid chain: MAISKKKRFFFDLAQDEDDAETVQEVKKVEQQLKLEPVVQPQHDLTNQTKANQSSQDRKFFSKDMPQFDFGPLLKFGDEFVKSFNQFPKQEPQTSTQPVNVQPQSEPTNFNNQVPTQPVHQTAEVHLNEFQQPTTTNFNQQPVATSNIQVEATQPIVEPVPQPEPQPAVEQPQVKQTTRPSNKLQEEENLPPPKAKVPGIIPLERQERLTTGVHFYTSTRVWNKVKRYAKAVNIPISRILTMILDQVIEE.

Disordered stretches follow at residues 85–107 and 158–198; these read NQFP…QSEP and EPVP…AKVP. A compositionally biased stretch (low complexity) spans 167 to 176; the sequence is PAVEQPQVKQ.

This is an uncharacterized protein from Mycoplasma pneumoniae (strain ATCC 29342 / M129 / Subtype 1) (Mycoplasmoides pneumoniae).